The chain runs to 247 residues: MKAGMFYCASQASTATANGERTVTARAIDRHNPIIKDGRRSFTAPCSSGDDYVAPYRQLSKITRVPSSSGDGKSVQVDKGRRSNSGSLMKLISYDVSLARKSFGCVVATPKTPPGSTRYLLGSDPVSLAGSTGQDTVATEESEASAPKRGSSGPVEEKKKSSGSGSDQVVVLRVSLHCHCRGCQGKVKKHLSKMQGVTSFNIDFASKKVTVTGDITPLEVLGCLSKVKNAQFWTPPPPSIPRANPET.

Positions Gly130 to Ser166 are disordered. The HMA domain maps to Asp167–Pro235. Residues Cys180 and Cys183 each coordinate a metal cation.

It localises to the cytoplasm. Its function is as follows. Heavy metal-associated protein involved in salt tolerance. The protein is Protein SODIUM POTASSIUM ROOT DEFECTIVE 3 of Arabidopsis thaliana (Mouse-ear cress).